We begin with the raw amino-acid sequence, 77 residues long: Probable [Fe-S]-dependent transcriptional repressor (77 aa).

Iron-sulfur cluster contacts are provided by cysteine 54, cysteine 59, cysteine 62, and cysteine 68.

The protein belongs to the FeoC family.

In terms of biological role, may function as a transcriptional regulator that controls feoABC expression. The polypeptide is Probable [Fe-S]-dependent transcriptional repressor (Proteus mirabilis (strain HI4320)).